The primary structure comprises 330 residues: Ketol-acid reductoisomerase (NADP(+)) (330 aa).

The region spanning 2–182 (ARLYYDTDAN…GGTRAGILET (181 aa)) is the KARI N-terminal Rossmann domain. Residues 25–28 (YGSQ), Ser-51, Ser-53, and 83–86 (DEVQ) contribute to the NADP(+) site. Residue His-108 is part of the active site. Gly-134 serves as a coordination point for NADP(+). Positions 183–328 (TFREETETDL…RELRAMFSWL (146 aa)) constitute a KARI C-terminal knotted domain. Mg(2+)-binding residues include Asp-191, Glu-195, Glu-227, and Glu-231. Ser-252 is a binding site for substrate.

It belongs to the ketol-acid reductoisomerase family. It depends on Mg(2+) as a cofactor.

The catalysed reaction is (2R)-2,3-dihydroxy-3-methylbutanoate + NADP(+) = (2S)-2-acetolactate + NADPH + H(+). It carries out the reaction (2R,3R)-2,3-dihydroxy-3-methylpentanoate + NADP(+) = (S)-2-ethyl-2-hydroxy-3-oxobutanoate + NADPH + H(+). It functions in the pathway amino-acid biosynthesis; L-isoleucine biosynthesis; L-isoleucine from 2-oxobutanoate: step 2/4. The protein operates within amino-acid biosynthesis; L-valine biosynthesis; L-valine from pyruvate: step 2/4. Involved in the biosynthesis of branched-chain amino acids (BCAA). Catalyzes an alkyl-migration followed by a ketol-acid reduction of (S)-2-acetolactate (S2AL) to yield (R)-2,3-dihydroxy-isovalerate. In the isomerase reaction, S2AL is rearranged via a Mg-dependent methyl migration to produce 3-hydroxy-3-methyl-2-ketobutyrate (HMKB). In the reductase reaction, this 2-ketoacid undergoes a metal-dependent reduction by NADPH to yield (R)-2,3-dihydroxy-isovalerate. The chain is Ketol-acid reductoisomerase (NADP(+)) from Synechococcus sp. (strain JA-2-3B'a(2-13)) (Cyanobacteria bacterium Yellowstone B-Prime).